The following is a 421-amino-acid chain: UDP-N-acetylglucosamine 1-carboxyvinyltransferase (421 aa).

22-23 is a phosphoenolpyruvate binding site; that stretch reads KN. Arginine 92 is a binding site for UDP-N-acetyl-alpha-D-glucosamine. The Proton donor role is filled by cysteine 116. Cysteine 116 carries the 2-(S-cysteinyl)pyruvic acid O-phosphothioketal modification. 2 residues coordinate UDP-N-acetyl-alpha-D-glucosamine: aspartate 306 and valine 328.

This sequence belongs to the EPSP synthase family. MurA subfamily.

Its subcellular location is the cytoplasm. The catalysed reaction is phosphoenolpyruvate + UDP-N-acetyl-alpha-D-glucosamine = UDP-N-acetyl-3-O-(1-carboxyvinyl)-alpha-D-glucosamine + phosphate. Its pathway is cell wall biogenesis; peptidoglycan biosynthesis. Cell wall formation. Adds enolpyruvyl to UDP-N-acetylglucosamine. The protein is UDP-N-acetylglucosamine 1-carboxyvinyltransferase of Thermotoga maritima (strain ATCC 43589 / DSM 3109 / JCM 10099 / NBRC 100826 / MSB8).